The sequence spans 501 residues: MHLRMASPPQPGPYMPDLPAVPAWLNKGDTAWQLVAATFVGIQSMPGLVVIYGSIVKKKWAVNSAFMALYAYASTLIVWVLVGFRMAFGDRLLPFWAKAGPALTQDFLVQRAVFPATAHYGSDGTLETPRTEPFYAEAALVLFEFEFAAITLVLLAGSLLGRMNIKAWMAFTPLWLLFSYTVGAFSLWGGGFLYQWGVIDYSGGYVIHLSSGVAGFTAAYWVGPRLKSDRERFSPNNILLMIAGGGLLWLGWAGFNGGAPYAPNVTATVAVLNTNVSAATSLLTWTCLDVIFFGKPSVIGAVQGMMTGLVCITPGAGLVHTWSAMLMGMFAGSVPWFTMMILHKKSTFLMKVDDTLAVFHTHAVAGILGGVLTGLLATPELCALDCPIPNMRGVFYGSGIGQLGKQLGGALFVTVWNLIVTSAILLCIGLFIPLRMSDDQLMIGDDAAHGEEAYALWGDGEKFDVTRPETTRTGGAGGAGREDTMEQRLTNMGARGVTIQL.

11 helical membrane-spanning segments follow: residues 35-55 (VAAT…YGSI), 64-84 (SAFM…LVGF), 140-160 (LVLF…GSLL), 174-194 (LWLL…GFLY), 203-223 (GGYV…YWVG), 238-258 (ILLM…FNGG), 274-294 (TNVS…IFFG), 298-318 (VIGA…GAGL), 322-342 (WSAM…MMIL), 356-376 (LAVF…TGLL), and 412-432 (FVTV…GLFI).

Belongs to the ammonia transporter channel (TC 1.A.11.2) family.

It localises to the membrane. Its function is as follows. Involved in ammonium transport. In Oryza sativa subsp. japonica (Rice), this protein is Ammonium transporter 2 member 2 (AMT2-2).